A 437-amino-acid chain; its full sequence is 3-ketoacyl-CoA thiolase (437 aa).

Catalysis depends on C99, which acts as the Acyl-thioester intermediate. Residues H392 and C422 each act as proton acceptor in the active site.

The protein belongs to the thiolase-like superfamily. Thiolase family. In terms of assembly, heterotetramer of two alpha chains (FadJ) and two beta chains (FadI).

It localises to the cytoplasm. The enzyme catalyses an acyl-CoA + acetyl-CoA = a 3-oxoacyl-CoA + CoA. It functions in the pathway lipid metabolism; fatty acid beta-oxidation. Its function is as follows. Catalyzes the final step of fatty acid oxidation in which acetyl-CoA is released and the CoA ester of a fatty acid two carbons shorter is formed. The polypeptide is 3-ketoacyl-CoA thiolase (Erwinia tasmaniensis (strain DSM 17950 / CFBP 7177 / CIP 109463 / NCPPB 4357 / Et1/99)).